Here is a 327-residue protein sequence, read N- to C-terminus: Ribose operon repressor (327 aa).

The region spanning 1–56 (MTTIKQVALEAGVSKSTVSRFIAQNGYVSDEAREKIERAIKKLNFRPNLSAQSLKT) is the HTH lacI-type domain. Residues 4-23 (IKQVALEAGVSKSTVSRFIA) constitute a DNA-binding region (H-T-H motif).

Transcriptional repressor for the ribose rbsDACBK operon. The chain is Ribose operon repressor (rbsR) from Lactococcus lactis subsp. lactis (strain IL1403) (Streptococcus lactis).